We begin with the raw amino-acid sequence, 583 residues long: Inactive tyrosine-protein kinase RYK (583 aa).

The signal sequence occupies residues 1-18 (MILRYLIFFAQLWALCLA). The Extracellular portion of the chain corresponds to 19–173 (NVNMFISKEE…EVDDTDSIDK (155 aa)). The 126-residue stretch at 22–147 (MFISKEEMNR…KVKLRQEKIC (126 aa)) folds into the WIF domain. Asparagine 30 and asparagine 46 each carry an N-linked (GlcNAc...) asparagine glycan. A disulfide bridge connects residues cysteine 113 and cysteine 147. The chain crosses the membrane as a helical span at residues 174–194 (AFFVIICIAAAFLLIVAATLI). Over 195 to 583 (CYFKRSKKED…DFNIQLSQYI (389 aa)) the chain is Cytoplasmic. Positions 281–583 (FQSLPLDMEG…DFNIQLSQYI (303 aa)) constitute a Protein kinase domain. Residues 287–295 (DMEGTFGEV) and lysine 327 each bind ATP.

The protein belongs to the protein kinase superfamily. Tyr protein kinase family.

Its subcellular location is the cell membrane. It localises to the basolateral cell membrane. Has no detectable kinase activity in vitro and is unlikely to function as a tyrosine kinase in vivo. Receptor which may act as a receptor for Wnt ligand mom-2. Plays a role in controlling P7.p vulva precursor cell lineage orientation during vulva development. Regulates pop-1 asymmetric distribution in P7.p and its daughter cells. Plays a role in the migration of ALM neurons during embryogenesis. The chain is Inactive tyrosine-protein kinase RYK from Caenorhabditis elegans.